Reading from the N-terminus, the 446-residue chain is Butyryl-CoA:acetate CoA-transferase (446 aa).

Residue 220–224 (GIGGM) coordinates CoA. Residue glutamate 245 is the 5-glutamyl coenzyme A thioester intermediate of the active site. Residues valine 320, glycine 343, and lysine 370 each coordinate CoA.

This sequence belongs to the acetyl-CoA hydrolase/transferase family. Butyryl-CoA CoA-transferase subfamily.

It catalyses the reaction butanoate + acetyl-CoA = butanoyl-CoA + acetate. It carries out the reaction propanoate + acetyl-CoA = propanoyl-CoA + acetate. Its pathway is lipid metabolism; butanoate metabolism. Coenzyme A-transferase that converts butyryl-CoA to butyrate. Can also use proprionyl-CoA as substrate in vitro. The protein is Butyryl-CoA:acetate CoA-transferase of Anaerostipes caccae (strain DSM 14662 / CCUG 47493 / JCM 13470 / NCIMB 13811 / L1-92).